The following is a 434-amino-acid chain: Serine--tRNA ligase (434 aa).

237 to 239 provides a ligand contact to L-serine; that stretch reads TAE. 268–270 contacts ATP; sequence RAE. E291 contacts L-serine. 358-361 serves as a coordination point for ATP; that stretch reads EISS. S393 contributes to the L-serine binding site.

This sequence belongs to the class-II aminoacyl-tRNA synthetase family. Type-1 seryl-tRNA synthetase subfamily. In terms of assembly, homodimer. The tRNA molecule binds across the dimer.

It localises to the cytoplasm. The enzyme catalyses tRNA(Ser) + L-serine + ATP = L-seryl-tRNA(Ser) + AMP + diphosphate + H(+). The catalysed reaction is tRNA(Sec) + L-serine + ATP = L-seryl-tRNA(Sec) + AMP + diphosphate + H(+). The protein operates within aminoacyl-tRNA biosynthesis; selenocysteinyl-tRNA(Sec) biosynthesis; L-seryl-tRNA(Sec) from L-serine and tRNA(Sec): step 1/1. Catalyzes the attachment of serine to tRNA(Ser). Is also able to aminoacylate tRNA(Sec) with serine, to form the misacylated tRNA L-seryl-tRNA(Sec), which will be further converted into selenocysteinyl-tRNA(Sec). The sequence is that of Serine--tRNA ligase from Rhodopseudomonas palustris (strain ATCC BAA-98 / CGA009).